Reading from the N-terminus, the 147-residue chain is Protein BUD31 homolog (147 aa).

The Nuclear localization signal motif lies at 8 to 12 (RRVRK).

The protein belongs to the BUD31 (G10) family. In terms of assembly, identified in the spliceosome C complex.

The protein resides in the nucleus. Functionally, involved in pre-mRNA splicing process. This chain is Protein BUD31 homolog, found in Caenorhabditis elegans.